The following is a 60-amino-acid chain: MPARKPAGARPEKPCPICGKPAVAASRPFCSERCRDVDLNRWLSGSYVIPVSKTDGEDAE.

Zn(2+) is bound by residues cysteine 15, cysteine 18, cysteine 30, and cysteine 34.

The protein belongs to the DNA gyrase inhibitor YacG family. In terms of assembly, interacts with GyrB. The cofactor is Zn(2+).

Its function is as follows. Inhibits all the catalytic activities of DNA gyrase by preventing its interaction with DNA. Acts by binding directly to the C-terminal domain of GyrB, which probably disrupts DNA binding by the gyrase. This chain is DNA gyrase inhibitor YacG, found in Nitrobacter hamburgensis (strain DSM 10229 / NCIMB 13809 / X14).